The sequence spans 137 residues: Large ribosomal subunit protein uL16 (137 aa).

It belongs to the universal ribosomal protein uL16 family. As to quaternary structure, part of the 50S ribosomal subunit.

Functionally, binds 23S rRNA and is also seen to make contacts with the A and possibly P site tRNAs. This is Large ribosomal subunit protein uL16 from Streptococcus pneumoniae serotype 2 (strain D39 / NCTC 7466).